The following is a 290-amino-acid chain: Aquaporin-3 (290 aa).

The Cytoplasmic segment spans residues 1–24 (MGRQKELVTRCGEMLHIRYRLLRQ). A helical transmembrane segment spans residues 25 to 42 (ALAECLGTLILVMFGCGS). Residues 43–56 (VAQVVLSRGTHGGF) lie on the Extracellular side of the membrane. Residues 57-74 (LTINLAFGFAVTLGILVA) traverse the membrane as a helical segment. The Cytoplasmic portion of the chain corresponds to 75-78 (GQVS). An intramembrane region (discontinuously helical) is located at residues 79-92 (GAHLNPAVTFAMCF). Positions 83-85 (NPA) match the NPA 1 motif. Over 93-100 (LAREPWIK) the chain is Cytoplasmic. A helical membrane pass occupies residues 101-121 (LPVYTLAQTLGAFLGAGIIFG). Topologically, residues 122–159 (LYYDAIWAFANNQLIVSGPNGTAGIFATYPSGHLDMVN) are extracellular. N-linked (GlcNAc...) asparagine glycosylation occurs at Asn141. A helical membrane pass occupies residues 160–177 (GFFDQFIGTASLIVCVLA). The Cytoplasmic segment spans residues 178–189 (IVDPNNNPVPRG). The chain crosses the membrane as a helical span at residues 190–206 (LEAFTVGLVVLVIGTSM). Over 207 to 210 (GFNS) the chain is Extracellular. An intramembrane region (discontinuously helical) is located at residues 211-224 (GYAVNPARDFGPRL). The NPA 2 motif lies at 215 to 217 (NPA). Topologically, residues 225–242 (FTAIAGWGSEVFTTGRHW) are extracellular. A helical membrane pass occupies residues 243–264 (WWVPIASPLLGSIAGVFVYQLM). Residues 265-290 (IGCHLEPPPPSTDEENVKLSQVKHKE) are Cytoplasmic-facing.

Belongs to the MIP/aquaporin (TC 1.A.8) family. In terms of assembly, homotetramer; each monomer provides an independent glycerol/water pore. Could also exist in other oligomeric states. In terms of tissue distribution, highly expressed in stomach and spleen, with lower expression in kidney and lung.

The protein resides in the cell membrane. It localises to the basolateral cell membrane. The enzyme catalyses glycerol(in) = glycerol(out). It carries out the reaction H2O(in) = H2O(out). It catalyses the reaction urea(in) = urea(out). The catalysed reaction is H2O2(out) = H2O2(in). Its function is as follows. Aquaglyceroporins form homotetrameric transmembrane channels, with each monomer independently mediating glycerol and water transport across the plasma membrane along their osmotic gradient. Could also be permeable to urea. Also participates in cell permeability to H2O2 and H2O2-mediated signaling. In skin, transports glycerol to the epidermis and stratum corneum, where it maintains hydration, elasticity, and supports lipid biosynthesis for barrier repair. In kidney, contributes to the reabsorption of water, helping the body maintain proper fluid balance. The protein is Aquaporin-3 of Sus scrofa (Pig).